The chain runs to 283 residues: Pyridoxine/pyridoxal/pyridoxamine kinase (283 aa).

Substrate is bound by residues S23 and H59. D125 contacts ATP. Y136 contacts Mg(2+). ATP-binding positions include T157, E162, T195, 222-225 (HAHV), and T232. A Mg(2+)-binding site is contributed by E162. Residue D234 coordinates substrate.

Belongs to the pyridoxine kinase family. PdxK subfamily. In terms of assembly, homodimer. Mg(2+) serves as cofactor.

It carries out the reaction pyridoxal + ATP = pyridoxal 5'-phosphate + ADP + H(+). The enzyme catalyses pyridoxine + ATP = pyridoxine 5'-phosphate + ADP + H(+). The catalysed reaction is pyridoxamine + ATP = pyridoxamine 5'-phosphate + ADP + H(+). It participates in cofactor metabolism; pyridoxal 5'-phosphate salvage; pyridoxal 5'-phosphate from pyridoxal: step 1/1. It functions in the pathway cofactor metabolism; pyridoxal 5'-phosphate salvage; pyridoxine 5'-phosphate from pyridoxine: step 1/1. Its pathway is cofactor metabolism; pyridoxal 5'-phosphate salvage; pyridoxamine 5'-phosphate from pyridoxamine: step 1/1. Its function is as follows. B6-vitamer kinase involved in the salvage pathway of pyridoxal 5'-phosphate (PLP). Catalyzes the phosphorylation of pyridoxine (PN), pyridoxal (PL), and pyridoxamine (PM), forming their respective 5'-phosphorylated esters, i.e. PNP, PLP and PMP. The sequence is that of Pyridoxine/pyridoxal/pyridoxamine kinase from Bordetella bronchiseptica (strain ATCC BAA-588 / NCTC 13252 / RB50) (Alcaligenes bronchisepticus).